Consider the following 621-residue polypeptide: uncharacterized protein (621 aa).

Composition is skewed to low complexity over residues 1-10, 63-79, 137-182, and 309-347; these read MIEDNINNNE, TEPLTTQLSSSPTTTPS, NNNN…NNFN, and NQSIQQLQQQQQQQQQQQQQQNNNDNNNNNNNNNNNNNN. Disordered regions lie at residues 1–29, 63–100, 135–194, 307–374, 430–471, 492–539, and 594–614; these read MIEDNINNNENENEDKNGNGNENENDKNN, TEPLTTQLSSSPTTTPSLKKRKPKTVRNPFIGPSSNKT, DDNN…KDND, KTNQ…EDDT, YNNN…IAKR, KQSQ…IKII, and PTQINSNSSNNIVSPSSSPSK. Polar residues predominate over residues 348–357; sequence STLTSSNSLS. Composition is skewed to low complexity over residues 431–459, 496–539, and 597–613; these read NNNNNNNNNNNNNNNNNNNNNNNNNNNNN, NNNN…IKII, and INSNSSNNIVSPSSSPS.

This is an uncharacterized protein from Dictyostelium discoideum (Social amoeba).